Reading from the N-terminus, the 298-residue chain is Protease HtpX homolog (298 aa).

The next 2 membrane-spanning stretches (helical) occupy residues 5-25 (IFLF…VLSV) and 45-65 (MALL…SLAI). A Zn(2+)-binding site is contributed by histidine 155. Glutamate 156 is a catalytic residue. Histidine 159 serves as a coordination point for Zn(2+). 2 helical membrane-spanning segments follow: residues 170–190 (LLQG…AWIA) and 204–224 (FIAM…VVFA). Glutamate 230 contributes to the Zn(2+) binding site.

It belongs to the peptidase M48B family. It depends on Zn(2+) as a cofactor.

It localises to the cell membrane. The protein is Protease HtpX homolog of Bacillus subtilis (strain 168).